Here is a 264-residue protein sequence, read N- to C-terminus: Thymidylate synthase (264 aa).

Arg-21 is a binding site for dUMP. Residue His-51 participates in (6R)-5,10-methylene-5,6,7,8-tetrahydrofolate binding. Position 126–127 (126–127 (RR)) interacts with dUMP. Catalysis depends on Cys-146, which acts as the Nucleophile. DUMP-binding positions include 166 to 169 (RSAD), Asn-177, and 207 to 209 (HLY). A (6R)-5,10-methylene-5,6,7,8-tetrahydrofolate-binding site is contributed by Asp-169. Residue Ala-263 coordinates (6R)-5,10-methylene-5,6,7,8-tetrahydrofolate.

It belongs to the thymidylate synthase family. Bacterial-type ThyA subfamily. In terms of assembly, homodimer.

It is found in the cytoplasm. The catalysed reaction is dUMP + (6R)-5,10-methylene-5,6,7,8-tetrahydrofolate = 7,8-dihydrofolate + dTMP. It participates in pyrimidine metabolism; dTTP biosynthesis. In terms of biological role, catalyzes the reductive methylation of 2'-deoxyuridine-5'-monophosphate (dUMP) to 2'-deoxythymidine-5'-monophosphate (dTMP) while utilizing 5,10-methylenetetrahydrofolate (mTHF) as the methyl donor and reductant in the reaction, yielding dihydrofolate (DHF) as a by-product. This enzymatic reaction provides an intracellular de novo source of dTMP, an essential precursor for DNA biosynthesis. The sequence is that of Thymidylate synthase from Legionella pneumophila (strain Corby).